A 222-amino-acid chain; its full sequence is PLASMODESMATA CALLOSE-BINDING PROTEIN 4 (222 aa).

The N-terminal stretch at 1-19 is a signal peptide; the sequence is MSVLLPLCLIISMFTYSNA. A disulfide bond links Cys22 and Cys83. The segment covering 88–187 has biased composition (low complexity); that stretch reads AASPSTTPPS…SVFPGTTLGP (100 aa). A disordered region spans residues 88 to 199; that stretch reads AASPSTTPPS…SGGLGDPNAG (112 aa). A lipid anchor (GPI-anchor amidated asparagine) is attached at Asn197. The propeptide at 198–222 is removed in mature form; it reads AGEKLSVRTNTVVFLLTGVAAMLVI.

In terms of processing, contains two additional disulfide bonds.

The protein resides in the cell membrane. Its subcellular location is the cell junction. It localises to the plasmodesma. This chain is PLASMODESMATA CALLOSE-BINDING PROTEIN 4 (PDCB4), found in Arabidopsis thaliana (Mouse-ear cress).